Consider the following 1045-residue polypeptide: Isoleucine--tRNA ligase (1045 aa).

The short motif at 49–59 (PYCSGRIHLGT) is the 'HIGH' region element. Positions 591–595 (KMSKS) match the 'KMSKS' region motif. K594 contacts ATP.

This sequence belongs to the class-I aminoacyl-tRNA synthetase family. IleS type 2 subfamily. In terms of assembly, monomer. The cofactor is Zn(2+).

The protein localises to the cytoplasm. It catalyses the reaction tRNA(Ile) + L-isoleucine + ATP = L-isoleucyl-tRNA(Ile) + AMP + diphosphate. In terms of biological role, catalyzes the attachment of isoleucine to tRNA(Ile). As IleRS can inadvertently accommodate and process structurally similar amino acids such as valine, to avoid such errors it has two additional distinct tRNA(Ile)-dependent editing activities. One activity is designated as 'pretransfer' editing and involves the hydrolysis of activated Val-AMP. The other activity is designated 'posttransfer' editing and involves deacylation of mischarged Val-tRNA(Ile). This is Isoleucine--tRNA ligase from Methanothermobacter marburgensis (strain ATCC BAA-927 / DSM 2133 / JCM 14651 / NBRC 100331 / OCM 82 / Marburg) (Methanobacterium thermoautotrophicum).